The chain runs to 248 residues: 21S rRNA pseudouridine(2819) synthase (248 aa).

D58 is a catalytic residue.

Belongs to the pseudouridine synthase RluA family.

It localises to the mitochondrion. It catalyses the reaction uridine(2819) in 21S rRNA = pseudouridine(2819) in 21S rRNA. Its function is as follows. Pseudouridylate synthase responsible for the pseudouridine-2819 formation in mitochondrial 21S rRNA. May modulate the efficiency or the fidelity of the mitochondrial translation machinery. The chain is 21S rRNA pseudouridine(2819) synthase (PUS5) from Candida albicans (strain SC5314 / ATCC MYA-2876) (Yeast).